A 484-amino-acid chain; its full sequence is Probable cytosol aminopeptidase (484 aa).

Residues lysine 256 and aspartate 261 each contribute to the Mn(2+) site. The active site involves lysine 268. Aspartate 279, aspartate 338, and glutamate 340 together coordinate Mn(2+). The active site involves arginine 342.

This sequence belongs to the peptidase M17 family. Mn(2+) serves as cofactor.

The protein localises to the cytoplasm. It carries out the reaction Release of an N-terminal amino acid, Xaa-|-Yaa-, in which Xaa is preferably Leu, but may be other amino acids including Pro although not Arg or Lys, and Yaa may be Pro. Amino acid amides and methyl esters are also readily hydrolyzed, but rates on arylamides are exceedingly low.. It catalyses the reaction Release of an N-terminal amino acid, preferentially leucine, but not glutamic or aspartic acids.. In terms of biological role, presumably involved in the processing and regular turnover of intracellular proteins. Catalyzes the removal of unsubstituted N-terminal amino acids from various peptides. This chain is Probable cytosol aminopeptidase, found in Methylibium petroleiphilum (strain ATCC BAA-1232 / LMG 22953 / PM1).